We begin with the raw amino-acid sequence, 953 residues long: Valine--tRNA ligase (953 aa).

Residues 42–52 carry the 'HIGH' region motif; the sequence is PNVTGSLHMGH. The 'KMSKS' region motif lies at 554-558; it reads KMSKS. K557 contributes to the ATP binding site. The stretch at 884–953 forms a coiled coil; it reads LIDKDAELAR…EAQKETIAAL (70 aa).

It belongs to the class-I aminoacyl-tRNA synthetase family. ValS type 1 subfamily. Monomer.

The protein localises to the cytoplasm. It catalyses the reaction tRNA(Val) + L-valine + ATP = L-valyl-tRNA(Val) + AMP + diphosphate. Catalyzes the attachment of valine to tRNA(Val). As ValRS can inadvertently accommodate and process structurally similar amino acids such as threonine, to avoid such errors, it has a 'posttransfer' editing activity that hydrolyzes mischarged Thr-tRNA(Val) in a tRNA-dependent manner. This chain is Valine--tRNA ligase, found in Photobacterium profundum (strain SS9).